A 183-amino-acid polypeptide reads, in one-letter code: Outer membrane protein H.8 (183 aa).

An N-terminal signal peptide occupies residues 1–17 (MKAYLALISAAVIGLAA). Cysteine 18 carries the N-palmitoyl cysteine lipid modification. Cysteine 18 carries S-diacylglycerol cysteine lipidation. A disordered region spans residues 27–51 (AEATPAAEAPASEAPAAEAAPADAA). One can recognise a Plastocyanin-like domain in the interval 57-183 (GNCAATVESN…LMNGKVTLVD (127 aa)). Histidine 102, cysteine 166, histidine 171, and methionine 175 together coordinate Cu cation.

The cofactor is Cu cation.

Its subcellular location is the cell outer membrane. This Neisseria meningitidis serogroup B (strain ATCC BAA-335 / MC58) protein is Outer membrane protein H.8.